Here is a 504-residue protein sequence, read N- to C-terminus: MALWRTNDSKVYLPPAPVSRIVNTEEYITRTGIYYYAGSSRLITLGHPYFPIPKTSTRAAIPKVSAFQYRVFRVQLPDPNKFGLPDPNLYNPDTDRLVWGCVGVEVGRGQPLGVGLSGHPLFNKYDDTENSRIANGNAQQDVRDNTSVDNKQTQLCIIGCAPPIGEHWGIGTTCKNTPVPPGDCPPLELVSSVIQDGDMIDTGFGAMDFAALQATKSDVPLDISQSVCKYPDYLKMSADTYGNSMFFHLRREQIFARHYYNKLVGVGEDIPNDYYIKGSGNGRDPIESYIYSATPSGSMITSDSQIFNKPYWLHRAQGHNNGICWNNQLFITCVDTTRSTNLTISTATAAVSPTFTPSNFKQYIRHGEEYELQFIFQLCKITLTTEVMAYLHTMDPTILEQWNFGLTLPPSASLEDAYRFVRNAATSCQKDTPPQAKPDPLAKYKFWDVDLKERFSLDLDQFALGRKFLLQVGVQRKPRPGLKRPASSASSSSSSSAKRKRVKK.

The disordered stretch occupies residues 476-504; the sequence is RKPRPGLKRPASSASSSSSSSAKRKRVKK. Low complexity predominate over residues 486–496; it reads ASSASSSSSSS.

Belongs to the papillomaviridae L1 protein family. Self-assembles into homopentamers. The capsid has an icosahedral symmetry and consists of 72 capsomers, with each capsomer being a pentamer of L1. Interacts with the minor capsid protein L2; this interaction is necessary for viral genome encapsidation. Interacts with protein E2; this interaction enhances E2-dependent replication and transcription activation.

The protein localises to the virion. It localises to the host nucleus. In terms of biological role, forms an icosahedral capsid with a T=7 symmetry and a 50 nm diameter. The capsid is composed of 72 pentamers linked to each other by disulfide bonds and associated with L2 proteins. Binds to heparan sulfate proteoglycans on cell surface of basal layer keratinocytes to provide initial virion attachment. This binding mediates a conformational change in the virus capsid that facilitates efficient infection. The virion enters the host cell via endocytosis. During virus trafficking, L1 protein dissociates from the viral DNA and the genomic DNA is released to the host nucleus. The virion assembly takes place within the cell nucleus. Encapsulates the genomic DNA together with protein L2. The polypeptide is Major capsid protein L1 (Homo sapiens (Human)).